Consider the following 281-residue polypeptide: Cytosolic Fe-S cluster assembly factor CFD1 (281 aa).

An ATP-binding site is contributed by 24–31 (GKGGVGKS). Residues C201 and C204 each coordinate [4Fe-4S] cluster.

The protein belongs to the Mrp/NBP35 ATP-binding proteins family. NUBP2/CFD1 subfamily. In terms of assembly, heterotetramer of 2 NBP35 and 2 CFD1 chains. Requires [4Fe-4S] cluster as cofactor.

It is found in the cytoplasm. Its function is as follows. Component of the cytosolic iron-sulfur (Fe/S) protein assembly (CIA) machinery. Required for maturation of extramitochondrial Fe-S proteins. The NBP35-CFD1 heterotetramer forms a Fe-S scaffold complex, mediating the de novo assembly of an Fe-S cluster and its transfer to target apoproteins. Required for biogenesis and export of both ribosomal subunits, which may reflect a role in assembly of the Fe/S clusters in RLI1, a protein which performs rRNA processing and ribosome export. This chain is Cytosolic Fe-S cluster assembly factor CFD1, found in Eremothecium gossypii (strain ATCC 10895 / CBS 109.51 / FGSC 9923 / NRRL Y-1056) (Yeast).